We begin with the raw amino-acid sequence, 240 residues long: 1-(5-phosphoribosyl)-5-[(5-phosphoribosylamino)methylideneamino] imidazole-4-carboxamide isomerase (240 aa).

Aspartate 10 serves as the catalytic Proton acceptor. Aspartate 131 serves as the catalytic Proton donor.

The protein belongs to the HisA/HisF family.

It is found in the cytoplasm. It catalyses the reaction 1-(5-phospho-beta-D-ribosyl)-5-[(5-phospho-beta-D-ribosylamino)methylideneamino]imidazole-4-carboxamide = 5-[(5-phospho-1-deoxy-D-ribulos-1-ylimino)methylamino]-1-(5-phospho-beta-D-ribosyl)imidazole-4-carboxamide. It functions in the pathway amino-acid biosynthesis; L-histidine biosynthesis; L-histidine from 5-phospho-alpha-D-ribose 1-diphosphate: step 4/9. In Shouchella clausii (strain KSM-K16) (Alkalihalobacillus clausii), this protein is 1-(5-phosphoribosyl)-5-[(5-phosphoribosylamino)methylideneamino] imidazole-4-carboxamide isomerase.